The primary structure comprises 512 residues: Maturase K (512 aa).

This sequence belongs to the intron maturase 2 family. MatK subfamily.

The protein resides in the plastid. Its subcellular location is the chloroplast. Its function is as follows. Usually encoded in the trnK tRNA gene intron. Probably assists in splicing its own and other chloroplast group II introns. The protein is Maturase K of Zantedeschia aethiopica (White calla lily).